The primary structure comprises 471 residues: 4-aminobutyrate aminotransferase (471 aa).

135 to 136 (GA) is a binding site for pyridoxal 5'-phosphate. Substrate is bound at residue arginine 192. Lysine 326 bears the N6-(pyridoxal phosphate)lysine mark. Threonine 351 contributes to the pyridoxal 5'-phosphate binding site.

It belongs to the class-III pyridoxal-phosphate-dependent aminotransferase family. Homodimer and homotetramer. Requires pyridoxal 5'-phosphate as cofactor.

It is found in the cytoplasm. The enzyme catalyses 4-aminobutanoate + 2-oxoglutarate = succinate semialdehyde + L-glutamate. Its function is as follows. Required for the degradation of gamma-aminobutyric acid (GABA), which is important for utilization of GABA as nitrogen source and for oxidative stress tolerance. Deaminates GABA to succinate semialdehyde, which in turn is converted to succinate by the succinate-semialdehyde dehydrogenase UGA2. Cannot transaminate beta-alanine (BAL). The sequence is that of 4-aminobutyrate aminotransferase (UGA1) from Saccharomyces cerevisiae (strain ATCC 204508 / S288c) (Baker's yeast).